A 245-amino-acid chain; its full sequence is Probable phosphatase Teth514_1060 (245 aa).

His8, His10, His16, His41, Glu74, His102, His133, Asp194, and His196 together coordinate Zn(2+).

This sequence belongs to the PHP family. Requires Zn(2+) as cofactor.

This is Probable phosphatase Teth514_1060 from Thermoanaerobacter sp. (strain X514).